The sequence spans 163 residues: Protein-export protein SecB (163 aa).

The protein belongs to the SecB family. As to quaternary structure, homotetramer, a dimer of dimers. One homotetramer interacts with 1 SecA dimer.

The protein localises to the cytoplasm. Functionally, one of the proteins required for the normal export of preproteins out of the cell cytoplasm. It is a molecular chaperone that binds to a subset of precursor proteins, maintaining them in a translocation-competent state. It also specifically binds to its receptor SecA. This Azotobacter vinelandii (strain DJ / ATCC BAA-1303) protein is Protein-export protein SecB.